Consider the following 189-residue polypeptide: B3 domain-containing protein At2g32645 (189 aa).

The segment at residues 33–133 (FNQVKTPDFL…KLCFALTPKI (101 aa)) is a DNA-binding region (TF-B3).

Its subcellular location is the nucleus. In Arabidopsis thaliana (Mouse-ear cress), this protein is B3 domain-containing protein At2g32645.